We begin with the raw amino-acid sequence, 426 residues long: Serine--tRNA ligase (426 aa).

The segment at 36 to 66 is disordered; it reads KRRHLQERTQDLQSQRNTISKEIGQKKAKGE. Over residues 46–55 the composition is skewed to polar residues; the sequence is DLQSQRNTIS. 233–235 contributes to the L-serine binding site; the sequence is TAE. 264–266 contributes to the ATP binding site; it reads RSE. Glu287 is a binding site for L-serine. 351–354 is a binding site for ATP; sequence EISS. Ser387 serves as a coordination point for L-serine.

Belongs to the class-II aminoacyl-tRNA synthetase family. Type-1 seryl-tRNA synthetase subfamily. In terms of assembly, homodimer. The tRNA molecule binds across the dimer.

The protein localises to the cytoplasm. It carries out the reaction tRNA(Ser) + L-serine + ATP = L-seryl-tRNA(Ser) + AMP + diphosphate + H(+). The enzyme catalyses tRNA(Sec) + L-serine + ATP = L-seryl-tRNA(Sec) + AMP + diphosphate + H(+). Its pathway is aminoacyl-tRNA biosynthesis; selenocysteinyl-tRNA(Sec) biosynthesis; L-seryl-tRNA(Sec) from L-serine and tRNA(Sec): step 1/1. Catalyzes the attachment of serine to tRNA(Ser). Is also able to aminoacylate tRNA(Sec) with serine, to form the misacylated tRNA L-seryl-tRNA(Sec), which will be further converted into selenocysteinyl-tRNA(Sec). In Francisella tularensis subsp. novicida (strain U112), this protein is Serine--tRNA ligase.